Consider the following 332-residue polypeptide: NH(3)-dependent NAD(+) synthetase (332 aa).

Residue 48 to 55 (GLSGGVDS) participates in ATP binding. Aspartate 54 serves as a coordination point for Mg(2+). Arginine 184 is a binding site for deamido-NAD(+). Residue threonine 204 participates in ATP binding. Glutamate 209 is a binding site for Mg(2+). Residues lysine 217 and aspartate 224 each coordinate deamido-NAD(+). ATP is bound by residues lysine 233 and threonine 255.

Belongs to the NAD synthetase family. As to quaternary structure, homodimer.

It catalyses the reaction deamido-NAD(+) + NH4(+) + ATP = AMP + diphosphate + NAD(+) + H(+). It participates in cofactor biosynthesis; NAD(+) biosynthesis; NAD(+) from deamido-NAD(+) (ammonia route): step 1/1. Catalyzes the ATP-dependent amidation of deamido-NAD to form NAD. Uses ammonia as a nitrogen source. This chain is NH(3)-dependent NAD(+) synthetase, found in Rhizobium rhizogenes (strain K84 / ATCC BAA-868) (Agrobacterium radiobacter).